The primary structure comprises 302 residues: tRNA dimethylallyltransferase (302 aa).

10–17 (GPTAIGKT) serves as a coordination point for ATP. 12–17 (TAIGKT) contributes to the substrate binding site. Positions 35 to 38 (DSRQ) are interaction with substrate tRNA.

This sequence belongs to the IPP transferase family. As to quaternary structure, monomer. Mg(2+) serves as cofactor.

It catalyses the reaction adenosine(37) in tRNA + dimethylallyl diphosphate = N(6)-dimethylallyladenosine(37) in tRNA + diphosphate. Its function is as follows. Catalyzes the transfer of a dimethylallyl group onto the adenine at position 37 in tRNAs that read codons beginning with uridine, leading to the formation of N6-(dimethylallyl)adenosine (i(6)A). This Christiangramia forsetii (strain DSM 17595 / CGMCC 1.15422 / KT0803) (Gramella forsetii) protein is tRNA dimethylallyltransferase.